Consider the following 235-residue polypeptide: MPKHGKKFRNALEGTDLQERFSVEDAVGKSLGAAFAKFDETVDVAIRLGVDPKYSDQMVRGAVTLPNGLGKTVRVAVFCKGEKQAEAREAGADIVGAEDLVAEVKAGNLNFDAAVATPDVMALVGQIGRLLGPRGLMPNAKTGSVTFDVAKAVSELKAGRVDFKVDKAGVLHAPLGKASFGPEKILGNLKALLDTVNRLKPSSAKGTYLISMAISTTMGPGFKVDMTQVKKFLEG.

Belongs to the universal ribosomal protein uL1 family. As to quaternary structure, part of the 50S ribosomal subunit.

Functionally, binds directly to 23S rRNA. The L1 stalk is quite mobile in the ribosome, and is involved in E site tRNA release. Its function is as follows. Protein L1 is also a translational repressor protein, it controls the translation of the L11 operon by binding to its mRNA. The sequence is that of Large ribosomal subunit protein uL1 from Desulfovibrio desulfuricans (strain ATCC 27774 / DSM 6949 / MB).